The chain runs to 194 residues: uncharacterized protein (194 aa).

Residues 25–156 form a disordered region; sequence PSWACRRGGP…ESPLGTLPCS (132 aa). Positions 43-57 are enriched in polar residues; sequence GPSTVPVTPTAGSCQ. The segment covering 104 to 113 has biased composition (low complexity); that stretch reads SSSPGPSFHL.

This is an uncharacterized protein from Homo sapiens (Human).